Here is a 379-residue protein sequence, read N- to C-terminus: Multicilin (379 aa).

Disordered regions lie at residues 26–46 (SRRSLGKPGKPERKFVPPWKS) and 87–106 (LLGTEAPPSGDSPASQNPSL). Residues 175-223 (EQYWKEVADQNQRALGTALIENNQLHVTLTQKQEEIASLRERNVQLKEL) adopt a coiled-coil conformation. Residues 289 to 309 (LQNRDPKRPRLQQEPDSKDCS) are compositionally biased toward basic and acidic residues. A disordered region spans residues 289–311 (LQNRDPKRPRLQQEPDSKDCSTR).

It belongs to the geminin family. Heterodimer (via coiled-coil domain) with GMNN (via coiled-coil domain); targets GMNN to the nucleus. Can form homodimers (in vitro, via coiled-coil domain), but these are much less stable than the heterodimer formed with GMNN.

The protein resides in the nucleus. Transcription regulator specifically required for multiciliate cell differentiation. Acts in a multiprotein complex containing E2F4 and E2F5 that binds and activates genes required for centriole biogenesis. Required for the deuterosome-mediated acentriolar pathway. Plays a role in mitotic cell cycle progression by promoting cell cycle exit. Modulates GMNN activity by reducing its affinity for CDT1. In Rattus norvegicus (Rat), this protein is Multicilin (Mcidas).